Reading from the N-terminus, the 28-residue chain is uncharacterized protein (28 aa).

Positions 1–18 (MLPRKYKPAYKKQAHRVK) are enriched in basic residues. A disordered region spans residues 1-28 (MLPRKYKPAYKKQAHRVKSNPQPAYTFQ). Positions 19–28 (SNPQPAYTFQ) are enriched in polar residues.

This is an uncharacterized protein from Saccharomyces cerevisiae (strain ATCC 204508 / S288c) (Baker's yeast).